We begin with the raw amino-acid sequence, 246 residues long: Bis(5'-nucleosyl)-tetraphosphatase PrpE [asymmetrical] (246 aa).

This sequence belongs to the PrpE family. The cofactor is Ni(2+).

It carries out the reaction P(1),P(4)-bis(5'-guanosyl) tetraphosphate + H2O = GMP + GTP + 2 H(+). Its function is as follows. Asymmetrically hydrolyzes Ap4p to yield AMP and ATP. The protein is Bis(5'-nucleosyl)-tetraphosphatase PrpE [asymmetrical] of Bacillus cereus (strain ATCC 10987 / NRS 248).